Here is a 174-residue protein sequence, read N- to C-terminus: Peptide methionine sulfoxide reductase MsrA (174 aa).

The active site involves Cys10.

Belongs to the MsrA Met sulfoxide reductase family.

The catalysed reaction is L-methionyl-[protein] + [thioredoxin]-disulfide + H2O = L-methionyl-(S)-S-oxide-[protein] + [thioredoxin]-dithiol. It catalyses the reaction [thioredoxin]-disulfide + L-methionine + H2O = L-methionine (S)-S-oxide + [thioredoxin]-dithiol. Its function is as follows. Has an important function as a repair enzyme for proteins that have been inactivated by oxidation. Catalyzes the reversible oxidation-reduction of methionine sulfoxide in proteins to methionine. This Arthrobacter sp. (strain FB24) protein is Peptide methionine sulfoxide reductase MsrA.